We begin with the raw amino-acid sequence, 637 residues long: Chaperone protein HtpG (637 aa).

Residues 1–334 (MQDVVNSEKL…SSDLPLNISR (334 aa)) form an a; substrate-binding region. The b stretch occupies residues 335–558 (ETLQNNKVIE…DGSMDIRMER (224 aa)). The segment at 559–637 (FLREQKQLNY…MNNVLVKVYQ (79 aa)) is c.

Belongs to the heat shock protein 90 family. In terms of assembly, homodimer.

Its subcellular location is the cytoplasm. Functionally, molecular chaperone. Has ATPase activity. The chain is Chaperone protein HtpG from Ehrlichia canis (strain Jake).